The chain runs to 269 residues: Protein SET (269 aa).

The disordered stretch occupies residues 1–33 (MSSVPKRAKLDGAPADGNTSAAAGNNEEESEAL). Residues Ser30, Ser148, and Ser152 each carry the phosphoserine modification. The segment at 227-269 (LVPDIEVEPEDEEDNEDNDEEAFDDEDGEDGEGEEEEEDEDDK) is disordered. The segment covering 231-269 (IEVEPEDEEDNEDNDEEAFDDEDGEDGEGEEEEEDEDDK) has biased composition (acidic residues).

This sequence belongs to the nucleosome assembly protein (NAP) family. Interacts specifically with B-type cyclins.

The sequence is that of Protein SET (Set) from Drosophila melanogaster (Fruit fly).